The sequence spans 48 residues: Large ribosomal subunit protein bL32 (48 aa).

This sequence belongs to the bacterial ribosomal protein bL32 family.

This chain is Large ribosomal subunit protein bL32, found in Helicobacter pylori (strain P12).